The sequence spans 91 residues: ATP synthase subunit c 2 (91 aa).

The next 2 membrane-spanning stretches (helical) occupy residues 4–24 (FSMC…GTGI) and 53–73 (IGLA…LIIL).

The protein belongs to the ATPase C chain family. As to quaternary structure, F-type ATPases have 2 components, F(1) - the catalytic core - and F(0) - the membrane proton channel. F(1) has five subunits: alpha(3), beta(3), gamma(1), delta(1), epsilon(1). F(0) has three main subunits: a(1), b(2) and c(10-14). The alpha and beta chains form an alternating ring which encloses part of the gamma chain. F(1) is attached to F(0) by a central stalk formed by the gamma and epsilon chains, while a peripheral stalk is formed by the delta and b chains.

It localises to the cell inner membrane. Its function is as follows. F(1)F(0) ATP synthase produces ATP from ADP in the presence of a proton or sodium gradient. F-type ATPases consist of two structural domains, F(1) containing the extramembraneous catalytic core and F(0) containing the membrane proton channel, linked together by a central stalk and a peripheral stalk. During catalysis, ATP synthesis in the catalytic domain of F(1) is coupled via a rotary mechanism of the central stalk subunits to proton translocation. Key component of the F(0) channel; it plays a direct role in translocation across the membrane. A homomeric c-ring of between 10-14 subunits forms the central stalk rotor element with the F(1) delta and epsilon subunits. This is ATP synthase subunit c 2 from Pelobacter propionicus (strain DSM 2379 / NBRC 103807 / OttBd1).